Here is a 443-residue protein sequence, read N- to C-terminus: Anthocyanidin 3-O-glucoside 5-O-glucosyltransferase 2 (443 aa).

The N-terminal stretch at M1 to Q22 is a signal peptide. Residue H16 is the Proton acceptor of the active site. H16 serves as a coordination point for an anthocyanidin. UDP-alpha-D-glucose-binding residues include Q340, H355, W358, N359, S360, E363, D379, and Q380.

This sequence belongs to the UDP-glycosyltransferase family.

It catalyses the reaction an anthocyanidin 3-O-beta-D-glucoside + UDP-alpha-D-glucose = an anthocyanidin 3,5-di-O-beta-D-glucoside + UDP + 2 H(+). It functions in the pathway pigment biosynthesis; anthocyanin biosynthesis. Functionally, catalyzes the glucosylation at the O-5 position of anthocyanidin 3-glucosides to form anthocyanidin 3,5-di-O-glucosides using UDP-glucose as sugar donor. Anthocyanidin 3,5-di-O-glucosides are molecules that are responsible for pigmentation. Also acts on anthocyanidin 3-O-(6-O-malonylglucoside). Much less active with hydroxycinnamoylglucose derivatives. No activity in the absence of the 3-O-glucoside group. The sequence is that of Anthocyanidin 3-O-glucoside 5-O-glucosyltransferase 2 (PF3R6) from Perilla frutescens (Beefsteak mint).